The following is a 183-amino-acid chain: Adenine phosphoribosyltransferase 3 (183 aa).

The protein belongs to the purine/pyrimidine phosphoribosyltransferase family. In terms of assembly, homodimer.

The protein resides in the cytoplasm. The catalysed reaction is AMP + diphosphate = 5-phospho-alpha-D-ribose 1-diphosphate + adenine. Its pathway is purine metabolism; AMP biosynthesis via salvage pathway; AMP from adenine: step 1/1. Functionally, catalyzes a salvage reaction resulting in the formation of AMP, that is energically less costly than de novo synthesis. May contribute to the recycling of adenine into adenylate nucleotides and the inactivation of cytokinins by phosphoribosylation. Possesses low activity toward adenine and cytokinins. The sequence is that of Adenine phosphoribosyltransferase 3 (APT3) from Arabidopsis thaliana (Mouse-ear cress).